We begin with the raw amino-acid sequence, 115 residues long: Ribonuclease P protein component (115 aa).

The protein belongs to the RnpA family. As to quaternary structure, consists of a catalytic RNA component (M1 or rnpB) and a protein subunit.

It carries out the reaction Endonucleolytic cleavage of RNA, removing 5'-extranucleotides from tRNA precursor.. Its function is as follows. RNaseP catalyzes the removal of the 5'-leader sequence from pre-tRNA to produce the mature 5'-terminus. It can also cleave other RNA substrates such as 4.5S RNA. The protein component plays an auxiliary but essential role in vivo by binding to the 5'-leader sequence and broadening the substrate specificity of the ribozyme. This chain is Ribonuclease P protein component, found in Natranaerobius thermophilus (strain ATCC BAA-1301 / DSM 18059 / JW/NM-WN-LF).